Here is a 149-residue protein sequence, read N- to C-terminus: Secreted RxLR effector protein 47 (149 aa).

The signal sequence occupies residues 1–22; that stretch reads MICLLPLIAVMLFVFATHTVLA. The RxLR-dEER motif lies at 57 to 79; that stretch reads RFLRQETTFEEKPSVNDVHAEER.

It belongs to the RxLR effector family.

Its subcellular location is the secreted. The protein resides in the host membrane. Secreted effector that completely suppresses the host cell death induced by cell death-inducing proteins. The polypeptide is Secreted RxLR effector protein 47 (Plasmopara viticola (Downy mildew of grapevine)).